The sequence spans 421 residues: Subtilisin-like protease 2 (421 aa).

The first 16 residues, 1-16, serve as a signal peptide directing secretion; that stretch reads MQLLNFGLLLLPFVAG. Positions 17–122 are excised as a propeptide; it reads DLAPQPEPLL…VHPDQHVYLA (106 aa). Positions 36–122 constitute an Inhibitor I9 domain; it reads QYIVTLKEGL…VHPDQHVYLA (87 aa). Residues 131 to 421 form the Peptidase S8 domain; it reads RWGLGYMSSK…ERKFTLPKYY (291 aa). Catalysis depends on charge relay system residues Asp169 and His201. Residues Asn248, Asn261, and Asn348 are each glycosylated (N-linked (GlcNAc...) asparagine). The Charge relay system role is filled by Ser357. Residue Asn388 is glycosylated (N-linked (GlcNAc...) asparagine).

The protein belongs to the peptidase S8 family.

It is found in the secreted. In terms of biological role, secreted subtilisin-like serine protease with keratinolytic activity that contributes to pathogenicity. This Arthroderma benhamiae (strain ATCC MYA-4681 / CBS 112371) (Trichophyton mentagrophytes) protein is Subtilisin-like protease 2 (SUB2).